The chain runs to 782 residues: Endonuclease MutS2 (782 aa).

336–343 (GPNTGGKT) is an ATP binding site. The Smr domain occupies 707–782 (LDLRGYRYED…GFGVTVATLK (76 aa)).

This sequence belongs to the DNA mismatch repair MutS family. MutS2 subfamily. As to quaternary structure, homodimer. Binds to stalled ribosomes, contacting rRNA.

Functionally, endonuclease that is involved in the suppression of homologous recombination and thus may have a key role in the control of bacterial genetic diversity. Its function is as follows. Acts as a ribosome collision sensor, splitting the ribosome into its 2 subunits. Detects stalled/collided 70S ribosomes which it binds and splits by an ATP-hydrolysis driven conformational change. Acts upstream of the ribosome quality control system (RQC), a ribosome-associated complex that mediates the extraction of incompletely synthesized nascent chains from stalled ribosomes and their subsequent degradation. Probably generates substrates for RQC. The polypeptide is Endonuclease MutS2 (Staphylococcus aureus (strain bovine RF122 / ET3-1)).